Consider the following 1338-residue polypeptide: Vascular endothelial growth factor receptor 1 (1338 aa).

An N-terminal signal peptide occupies residues 1-26; that stretch reads MVSYWDTGVLLCALLSCLLLTGSSSG. Residues 27–758 lie on the Extracellular side of the membrane; sequence SKLKDPELSL…QGTSDKSNLE (732 aa). 7 consecutive Ig-like C2-type domains span residues 32-123, 151-214, 230-327, 335-421, 428-553, 556-654, and 661-747; these read PELS…TESA, GREL…VNGH, IDVQ…TSVH, TVKH…LTAT, PQIY…FYIT, PNGF…KEIT, and PYLL…AYLT. 2 disulfides stabilise this stretch: cysteine 53–cysteine 107 and cysteine 158–cysteine 207. N-linked (GlcNAc...) asparagine glycans are attached at residues asparagine 100, asparagine 164, asparagine 196, and asparagine 251. An intrachain disulfide couples cysteine 252 to cysteine 311. Asparagine 323, asparagine 402, asparagine 417, asparagine 474, asparagine 547, asparagine 597, asparagine 620, asparagine 625, and asparagine 666 each carry an N-linked (GlcNAc...) asparagine glycan. Cysteine 454 and cysteine 535 are disulfide-bonded. Cysteine 577 and cysteine 636 are oxidised to a cystine. A disulfide bridge connects residues cysteine 682 and cysteine 731. Residues 759–780 traverse the membrane as a helical segment; it reads LITLTCTCVAATLFWLLLTLFI. At 781–1338 the chain is on the cytoplasmic side; it reads RKMKRSSSEI…SVVLYSTPPI (558 aa). The region spanning 827 to 1158 is the Protein kinase domain; sequence LKLGKSLGRG…ELVEKLGDLL (332 aa). ATP contacts are provided by residues 833–841 and lysine 861; that span reads LGRGAFGKV. Residue tyrosine 914 is modified to Phosphotyrosine; by autocatalysis. Over residues 940–957 the composition is skewed to basic and acidic residues; the sequence is PKKEKMEPGLEQGKKPRL. The segment at 940–982 is disordered; it reads PKKEKMEPGLEQGKKPRLDSVTSSESFASSGFQEDKSLSDVEE. Over residues 959–971 the composition is skewed to polar residues; sequence SVTSSESFASSGF. The active-site Proton acceptor is the aspartate 1022. A phosphotyrosine; by autocatalysis mark is found at tyrosine 1053, tyrosine 1169, tyrosine 1213, tyrosine 1242, tyrosine 1309, tyrosine 1327, and tyrosine 1333.

The protein belongs to the protein kinase superfamily. Tyr protein kinase family. CSF-1/PDGF receptor subfamily. Interacts with VEGFA, VEGFB and PGF. Monomer in the absence of bound VEGFA, VEGFB or PGF. Homodimer in the presence of bound VEGFA, VEGFB and PGF. Can also form a heterodimer with KDR. Interacts (when tyrosine phosphorylated) with CBL, CRK, GRB2, NCK1, PIK3R1, PLCG, PSEN1 and PTPN11. Probably also interacts with PTPRB. Interacts with RACK1. Identified in a complex with CBL and CD2AP. N-glycosylated. Post-translationally, ubiquitinated after VEGFA-mediated autophosphorylation, leading to proteolytic degradation. In terms of processing, autophosphorylated on tyrosine residues upon ligand binding. Autophosphorylation occurs in trans, i.e. one subunit of the dimeric receptor phosphorylates tyrosine residues on the other subunit. Phosphorylation at Tyr-1169 is important for interaction with PLCG. Phosphorylation at Tyr-1213 is important for interaction with PIK3R1, PTPN11, GRB2, and PLCG. Phosphorylation at Tyr-1333 is important for endocytosis and for interaction with CBL, NCK1 and CRK. Is probably dephosphorylated by PTPRB. As to expression, detected in normal lung, but also in placenta, liver, kidney, heart and brain tissues. Specifically expressed in most of the vascular endothelial cells, and also expressed in peripheral blood monocytes. Isoform 2 is strongly expressed in placenta. Isoform 3 is expressed in corneal epithelial cells (at protein level). Isoform 3 is expressed in vascular smooth muscle cells (VSMC).

The protein resides in the cell membrane. It localises to the endosome. It is found in the secreted. Its subcellular location is the cytoplasm. It carries out the reaction L-tyrosyl-[protein] + ATP = O-phospho-L-tyrosyl-[protein] + ADP + H(+). Present in an inactive conformation in the absence of bound ligand. Binding of VEGFA, VEGFB or PGF leads to dimerization and activation by autophosphorylation on tyrosine residues. Functionally, tyrosine-protein kinase that acts as a cell-surface receptor for VEGFA, VEGFB and PGF, and plays an essential role in the development of embryonic vasculature, the regulation of angiogenesis, cell survival, cell migration, macrophage function, chemotaxis, and cancer cell invasion. Acts as a positive regulator of postnatal retinal hyaloid vessel regression. May play an essential role as a negative regulator of embryonic angiogenesis by inhibiting excessive proliferation of endothelial cells. Can promote endothelial cell proliferation, survival and angiogenesis in adulthood. Its function in promoting cell proliferation seems to be cell-type specific. Promotes PGF-mediated proliferation of endothelial cells, proliferation of some types of cancer cells, but does not promote proliferation of normal fibroblasts (in vitro). Has very high affinity for VEGFA and relatively low protein kinase activity; may function as a negative regulator of VEGFA signaling by limiting the amount of free VEGFA and preventing its binding to KDR. Modulates KDR signaling by forming heterodimers with KDR. Ligand binding leads to the activation of several signaling cascades. Activation of PLCG leads to the production of the cellular signaling molecules diacylglycerol and inositol 1,4,5-trisphosphate and the activation of protein kinase C. Mediates phosphorylation of PIK3R1, the regulatory subunit of phosphatidylinositol 3-kinase, leading to activation of phosphatidylinositol kinase and the downstream signaling pathway. Mediates activation of MAPK1/ERK2, MAPK3/ERK1 and the MAP kinase signaling pathway, as well as of the AKT1 signaling pathway. Phosphorylates SRC and YES1, and may also phosphorylate CBL. Promotes phosphorylation of AKT1 at 'Ser-473'. Promotes phosphorylation of PTK2/FAK1. Its function is as follows. Phosphorylates PLCG. May function as decoy receptor for VEGFA. In terms of biological role, has a truncated kinase domain; it increases phosphorylation of SRC at 'Tyr-418' by unknown means and promotes tumor cell invasion. The chain is Vascular endothelial growth factor receptor 1 (FLT1) from Homo sapiens (Human).